Reading from the N-terminus, the 740-residue chain is NAD(P)H-quinone oxidoreductase subunit 5, chloroplastic (740 aa).

The next 17 helical transmembrane spans lie at 9–29, 40–60, 89–109, 125–145, 147–167, 185–205, 219–239, 258–278, 290–310, 327–347, 354–374, 396–416, 425–445, 521–538, 545–565, 599–619, and 720–740; these read WIIP…LLVV, WAFI…NISI, IDSL…MVLI, FAYL…SNLI, IYIF…FWFT, GDFG…SFEF, NTIN…GAIA, TPIS…FLVA, IMYF…TLAL, LGYI…FHLI, ALLF…VGYS, TTFL…CFWS, WLYS…TAFY, MFSF…PYPH, LLSV…GIPL, FVIN…IASF, and YLFV…YFVL.

The protein belongs to the complex I subunit 5 family. As to quaternary structure, NDH is composed of at least 16 different subunits, 5 of which are encoded in the nucleus.

It localises to the plastid. The protein resides in the chloroplast thylakoid membrane. The enzyme catalyses a plastoquinone + NADH + (n+1) H(+)(in) = a plastoquinol + NAD(+) + n H(+)(out). The catalysed reaction is a plastoquinone + NADPH + (n+1) H(+)(in) = a plastoquinol + NADP(+) + n H(+)(out). NDH shuttles electrons from NAD(P)H:plastoquinone, via FMN and iron-sulfur (Fe-S) centers, to quinones in the photosynthetic chain and possibly in a chloroplast respiratory chain. The immediate electron acceptor for the enzyme in this species is believed to be plastoquinone. Couples the redox reaction to proton translocation, and thus conserves the redox energy in a proton gradient. In Piper cenocladum (Ant piper), this protein is NAD(P)H-quinone oxidoreductase subunit 5, chloroplastic (ndhF).